The sequence spans 316 residues: tRNA dimethylallyltransferase (316 aa).

17–24 contributes to the ATP binding site; the sequence is GPTASGKT. 19–24 is a substrate binding site; that stretch reads TASGKT. Interaction with substrate tRNA stretches follow at residues 42-45, 166-170, 247-252, and 280-287; these read DSAL, QRLSR, RCVGYR, and KRQITWLR.

This sequence belongs to the IPP transferase family. As to quaternary structure, monomer. The cofactor is Mg(2+).

It carries out the reaction adenosine(37) in tRNA + dimethylallyl diphosphate = N(6)-dimethylallyladenosine(37) in tRNA + diphosphate. Functionally, catalyzes the transfer of a dimethylallyl group onto the adenine at position 37 in tRNAs that read codons beginning with uridine, leading to the formation of N6-(dimethylallyl)adenosine (i(6)A). The polypeptide is tRNA dimethylallyltransferase (Shigella boydii serotype 18 (strain CDC 3083-94 / BS512)).